Here is a 100-residue protein sequence, read N- to C-terminus: NADH-quinone oxidoreductase subunit K (100 aa).

Helical transmembrane passes span 4–24 (LSYSLSLAAILFMLGLTGIMI), 29–49 (LFLLLGLEIMINAAALAFVIV), and 60–80 (VMYILTVTIAATEASIGLALL).

This sequence belongs to the complex I subunit 4L family. NDH-1 is composed of 14 different subunits. Subunits NuoA, H, J, K, L, M, N constitute the membrane sector of the complex.

It localises to the cell membrane. The catalysed reaction is a quinone + NADH + 5 H(+)(in) = a quinol + NAD(+) + 4 H(+)(out). NDH-1 shuttles electrons from NADH, via FMN and iron-sulfur (Fe-S) centers, to quinones in the respiratory chain. The immediate electron acceptor for the enzyme in this species is believed to be ubiquinone. Couples the redox reaction to proton translocation (for every two electrons transferred, four hydrogen ions are translocated across the cytoplasmic membrane), and thus conserves the redox energy in a proton gradient. The chain is NADH-quinone oxidoreductase subunit K from Baumannia cicadellinicola subsp. Homalodisca coagulata.